The primary structure comprises 260 residues: Thrombin-like enzyme 2 (260 aa).

A signal peptide spans 1–18 (MMLIRVLANLLILQLSYA). A propeptide spanning residues 19 to 24 (QKSSEL) is cleaved from the precursor. In terms of domain architecture, Peptidase S1 spans 25-251 (VIGGDECNIN…HLDWIQSIIA (227 aa)). 6 disulfides stabilise this stretch: Cys31-Cys165, Cys52-Cys68, Cys102-Cys258, Cys144-Cys212, Cys176-Cys191, and Cys202-Cys227. The active-site Charge relay system is the His67. N-linked (GlcNAc...) asparagine glycosylation is present at Asn105. Catalysis depends on Asp112, which acts as the Charge relay system. Asn156 and Asn172 each carry an N-linked (GlcNAc...) asparagine glycan. The Charge relay system role is filled by Ser206. Asn253 carries an N-linked (GlcNAc...) asparagine glycan.

It belongs to the peptidase S1 family. Snake venom subfamily. In terms of assembly, monomer. In terms of tissue distribution, expressed by the venom gland.

The protein localises to the secreted. Thrombin-like snake venom serine protease. The sequence is that of Thrombin-like enzyme 2 from Trimeresurus albolabris (White-lipped pit viper).